Here is a 398-residue protein sequence, read N- to C-terminus: Argininosuccinate synthase (398 aa).

8–16 (AYSGGLDTS) contributes to the ATP binding site. Y87 provides a ligand contact to L-citrulline. G117 is an ATP binding site. L-aspartate-binding residues include T119, N123, and D124. N123 contacts L-citrulline. Positions 127, 175, 260, and 272 each coordinate L-citrulline.

This sequence belongs to the argininosuccinate synthase family. Type 1 subfamily. In terms of assembly, homotetramer.

The protein resides in the cytoplasm. The enzyme catalyses L-citrulline + L-aspartate + ATP = 2-(N(omega)-L-arginino)succinate + AMP + diphosphate + H(+). The protein operates within amino-acid biosynthesis; L-arginine biosynthesis; L-arginine from L-ornithine and carbamoyl phosphate: step 2/3. The chain is Argininosuccinate synthase from Mycobacterium avium (strain 104).